We begin with the raw amino-acid sequence, 887 residues long: Ubiquitin carboxyl-terminal hydrolase 4 (887 aa).

The Rhodanese domain maps to 202–328 (KEDSLLLIDV…WIKNGGEIDK (127 aa)). Disordered regions lie at residues 358–465 (AFPD…PKPP) and 484–505 (QKQN…TLIR). A compositionally biased stretch (polar residues) spans 387 to 402 (TPPNGSSTLGRINSPV). The 361-residue stretch at 525 to 885 (VGLENMGNSC…SAYVLFYHRI (361 aa)) folds into the USP domain. Residue Cys-534 is the Nucleophile of the active site. His-842 acts as the Proton acceptor in catalysis.

The protein belongs to the peptidase C19 family.

It is found in the cytoplasm. It localises to the late endosome membrane. It carries out the reaction Thiol-dependent hydrolysis of ester, thioester, amide, peptide and isopeptide bonds formed by the C-terminal Gly of ubiquitin (a 76-residue protein attached to proteins as an intracellular targeting signal).. Its activity is regulated as follows. RFU1 is an inhibitor of deubiquitination activity. Ubiquitin thioesterase that acts at the late endosome/prevacuolar compartment to recover ubiquitin from ubiquitinated membrane proteins en route to the vacuole. Also removes ubiquitin from soluble proteins targeted to proteasomes. Is essential to maintain a normal level of free ubiquitin. Required for promoting coordination of DNA replication and avoids DNA overreplication. This chain is Ubiquitin carboxyl-terminal hydrolase 4 (DOA4), found in Candida glabrata (strain ATCC 2001 / BCRC 20586 / JCM 3761 / NBRC 0622 / NRRL Y-65 / CBS 138) (Yeast).